Consider the following 228-residue polypeptide: Somatolactin (228 aa).

Positions 1–24 (MFSIRMNKVLQGFVCLMLTHRIVG) are cleaved as a signal peptide. 3 disulfide bridges follow: Cys29–Cys38, Cys88–Cys200, and Cys217–Cys225. 2 N-linked (GlcNAc...) asparagine glycosylation sites follow: Asn141 and Asn177.

It belongs to the somatotropin/prolactin family.

It is found in the secreted. This chain is Somatolactin, found in Anguilla anguilla (European freshwater eel).